A 304-amino-acid chain; its full sequence is Putative S-adenosyl-L-methionine-dependent methyltransferase MAP_3385 (304 aa).

Residues Asp-129 and 158 to 159 (DL) each bind S-adenosyl-L-methionine.

It belongs to the UPF0677 family.

In terms of biological role, exhibits S-adenosyl-L-methionine-dependent methyltransferase activity. The sequence is that of Putative S-adenosyl-L-methionine-dependent methyltransferase MAP_3385 from Mycolicibacterium paratuberculosis (strain ATCC BAA-968 / K-10) (Mycobacterium paratuberculosis).